The sequence spans 150 residues: Probable deoxyuridine 5'-triphosphate nucleotidohydrolase (150 aa).

The protein belongs to the dCTP deaminase family. Archaeal dUTPase subfamily.

It carries out the reaction dUTP + H2O = dUMP + diphosphate + H(+). The protein operates within pyrimidine metabolism; dUMP biosynthesis; dUMP from dCTP (dUTP route): step 2/2. This enzyme is involved in nucleotide metabolism: it produces dUMP, the immediate precursor of thymidine nucleotides and it decreases the intracellular concentration of dUTP so that uracil cannot be incorporated into DNA. The polypeptide is Probable deoxyuridine 5'-triphosphate nucleotidohydrolase (Methanothermobacter thermautotrophicus (strain ATCC 29096 / DSM 1053 / JCM 10044 / NBRC 100330 / Delta H) (Methanobacterium thermoautotrophicum)).